The chain runs to 274 residues: tRNA-cytidine(32) 2-sulfurtransferase (274 aa).

Positions serine 40–serine 45 match the PP-loop motif motif. [4Fe-4S] cluster-binding residues include cysteine 115, cysteine 118, and cysteine 206.

The protein belongs to the TtcA family. In terms of assembly, homodimer. Mg(2+) serves as cofactor. [4Fe-4S] cluster is required as a cofactor.

It localises to the cytoplasm. It catalyses the reaction cytidine(32) in tRNA + S-sulfanyl-L-cysteinyl-[cysteine desulfurase] + AH2 + ATP = 2-thiocytidine(32) in tRNA + L-cysteinyl-[cysteine desulfurase] + A + AMP + diphosphate + H(+). Its pathway is tRNA modification. Functionally, catalyzes the ATP-dependent 2-thiolation of cytidine in position 32 of tRNA, to form 2-thiocytidine (s(2)C32). The sulfur atoms are provided by the cysteine/cysteine desulfurase (IscS) system. In Pseudomonas putida (strain GB-1), this protein is tRNA-cytidine(32) 2-sulfurtransferase.